The following is a 264-amino-acid chain: Putative ankyrin repeat domain-containing protein 19 (264 aa).

5 ANK repeats span residues 67-96, 100-129, 133-162, 166-195, and 199-228; these read KDRTVLHLTCAHGRVEVVTLLLSRRCQINI, LNRTPLMKAVHCQEEACAIILLEHGANPNI, YSNTALHYAVYNKGTSLAEKLLSHHANIEA, EGNTPLLFAINSRRQQIVEFLLKNQANLHA, and FRRTALMLAVQHNSSSIVSLLLQQNINIFS.

The sequence is that of Putative ankyrin repeat domain-containing protein 19 (ANKRD19P) from Homo sapiens (Human).